The primary structure comprises 399 residues: MLSILSIAALLIATVQAADFSSSCPIDSPISCSSNGDTSNSCCYENPGGIILFTQFWDYNPASGPADSFTIHSIWNDYCSGGYPQFCDTSLEIDSTGSTIESIVVDQFGDQTLYDNMNKYWTDINGNNKKFWAHEFNKHGTCLNTLNPSCYSNYKQNENVYDYYSLVYQLFQKLPTYQWLVSAGIKPSTTATYTLSQIQSALKSKFGAEVYIACDSNNAINEVWYFYNIKGSILQQNYLPIDTVSKTNCPSSGIKFPPKGNSGANTLTTKTTGTTTSGSGSTSVPATSYINLTGKSGCLISNGKYYTSGTCATYHFNAGSSGNTQITSSKGNCGIDSSNQFTCSSSTSATDFQVSGGSIGYNGNFDWCLGAVTGSGSTAQTSVKLSDGSCSSFKLTLSS.

The first 17 residues, 1–17 (MLSILSIAALLIATVQA), serve as a signal peptide directing secretion. 5 cysteine pairs are disulfide-bonded: C24/C43, C32/C79, C42/C150, C87/C142, and C214/C249. Active-site residues include H72, E135, and H139. A disordered region spans residues 259 to 279 (KGNSGANTLTTKTTGTTTSGS). A compositionally biased stretch (low complexity) spans 262–279 (SGANTLTTKTTGTTTSGS). N291 is a glycosylation site (N-linked (GlcNAc...) asparagine).

It belongs to the RNase T2 family.

It localises to the vacuole lumen. The protein localises to the cytoplasm. The catalysed reaction is a ribonucleotidyl-ribonucleotide-RNA + H2O = a 3'-end 3'-phospho-ribonucleotide-RNA + a 5'-end dephospho-ribonucleoside-RNA + H(+). Functionally, rnase which modulates cell survival under stress conditions. Released from the vacuole to the cytoplasm during stress to promote tRNA and rRNA cleavage and to activate separately a downstream pathway that promotes cell death. Involved in cell size, vacuolar morphology and growth at high temperatures and high salt concentration. This is Ribonuclease T2-like 1-A (RNY1-A) from Candida albicans (strain SC5314 / ATCC MYA-2876) (Yeast).